A 346-amino-acid polypeptide reads, in one-letter code: Bifunctional phosphatase IMPL2, chloroplastic (346 aa).

Residues methionine 1 to methionine 61 constitute a chloroplast transit peptide. Glutamate 147, aspartate 165, and aspartate 168 together coordinate Mg(2+). Glutamate 147 contacts substrate. Residues isoleucine 167–threonine 170, glycine 263–aspartate 265, glutamate 282, and aspartate 289 each bind substrate. Residue aspartate 289 coordinates Mg(2+).

Belongs to the inositol monophosphatase superfamily. Requires Mg(2+) as cofactor. Ubiquitous. High expression in roots. Expressed in pistil and seed endosperm.

It localises to the plastid. The protein resides in the chloroplast. It carries out the reaction a myo-inositol phosphate + H2O = myo-inositol + phosphate. The catalysed reaction is L-histidinol phosphate + H2O = L-histidinol + phosphate. The enzyme catalyses beta-L-galactose 1-phosphate + H2O = L-galactose + phosphate. Its pathway is amino-acid biosynthesis; L-histidine biosynthesis; L-histidine from 5-phospho-alpha-D-ribose 1-diphosphate: step 8/9. It participates in polyol metabolism; myo-inositol biosynthesis; myo-inositol from D-glucose 6-phosphate: step 2/2. In terms of biological role, phosphatase required for histidine production. Also acts on L-galactose 1-phosphate (L-Gal 1-P), D-myoinositol 3-phosphate (D-Ins 3-P) and D-myoinositol 1-phosphate (D-Ins 1-P). The sequence is that of Bifunctional phosphatase IMPL2, chloroplastic (HISN7) from Arabidopsis thaliana (Mouse-ear cress).